A 628-amino-acid polypeptide reads, in one-letter code: MPCVQAQYSPSPPGSTYATQTYGSEYTTEIMNPDYAKLTMDLGSTGIMATATTSLPSFSTFMEGYPSSCELKPSCLYQMPPSGPRPLIKMEEGREHGYHHHHHHHHHHHHHHQQQQPSIPPPSGPEDEVLPSTSMYFKQSPPSTPTTPGFPPQAGALWDDELPSAPGCIAPGPLLDPQMKAVPPMAAAARFPIFFKPSPPHPPAPSPAGGHHLGYDPTAAAALSLPLGAAAAAGSQAAALEGHPYGLPLAKRTATLTFPPLGLTASPTASSLLGESPSLPSPPNRSSSSGEGTCAVCGDNAACQHYGVRTCEGCKGFFKRTVQKNAKYVCLANKNCPVDKRRRNRCQYCRFQKCLSVGMVKEVVRTDSLKGRRGRLPSKPKSPLQQEPSQPSPPSPPICMMNALVRALTDATPRDLDYSRYCPTDQATAGTDAEHVQQFYNLLTASIDVSRSWAEKIPGFTDLPKEDQTLLIESAFLELFVLRLSIRSNTAEDKFVFCNGLVLHRLQCLRGFGEWLDSIKDFSLNLQSLNLDIQALACLSALSMITERHGLKEPKRVEELCNKITSSLKDHQRKGQALEPSEPKVLRALVELRKICTQGLQRIFYLKLEDLVSPPSVIDKLFLDTLPF.

Positions 1–112 (MPCVQAQYSP…HHHHHHHHHH (112 aa)) are activation function (AF)-1 domain. The required for DNA-PK heterotrimer stretch occupies residues 1 to 140 (MPCVQAQYSP…PSTSMYFKQS (140 aa)). An interaction with NCOA1, NCOA2, NCOA3 and KAT2B region spans residues 1–293 (MPCVQAQYSP…NRSSSSGEGT (293 aa)). Disordered stretches follow at residues 96–163 (HGYH…DELP) and 269–290 (ASSLLGESPSLPSPPNRSSSSG). Positions 97–113 (GYHHHHHHHHHHHHHHQ) are enriched in basic residues. The span at 142–151 (PSTPTTPGFP) shows a compositional bias: pro residues. The segment covering 270 to 289 (SSLLGESPSLPSPPNRSSSS) has biased composition (low complexity). Residues 291 to 366 (EGTCAVCGDN…VGMVKEVVRT (76 aa)) constitute a DNA-binding region (nuclear receptor). 2 NR C4-type zinc fingers span residues 294–314 (CAVCGDNAACQHYGVRTCEGC) and 330–354 (CLANKNCPVDKRRRNRCQYCRFQKC). The tract at residues 366–396 (TDSLKGRRGRLPSKPKSPLQQEPSQPSPPSP) is disordered. Residues 379-389 (KPKSPLQQEPS) are compositionally biased toward low complexity. Residues 381-628 (KSPLQQEPSQ…DKLFLDTLPF (248 aa)) form an interaction with KAT2B region. Residues 396-625 (PPICMMNALV…SVIDKLFLDT (230 aa)) enclose the NR LBD domain.

Belongs to the nuclear hormone receptor family. NR4 subfamily. As to quaternary structure, interacts with SIX3 (via homeobox); differentially regulates the transcriptional activities of NR4A3. Interacts with NR3C1 (via nuclear receptor DNA-binding domain); the interactions represses transcription activity of NR4A3 on the POMC promoter Nur response element (NurRE). Interacts with TRIM28; the interactions potentiates NR4A3 activity on NurRE promoter. Binds DNA as a monomer and homodimer. Interacts with PARP1; activates PARP1 by improving acetylation of PARP1 and suppressing the interaction between PARP1 and SIRT1. Interacts with the constituents of DNA-PK heterotrimer PRKDC, XRCC6 and XRCC5; phosphorylates and prevents NR4A3 ubiquitinylation and degradation. Interacts with NCOA2; potentiates the activity of the NR4A3. Interacts with NCOA1, NCOA3, MED1 and KAT2B. Interacts with EP300 and NCOA2; mediates the recruitment of MED1 in the coactivator complex. Post-translationally, phosphorylated by PRKDC. Expressed at high levels in cultured apoptotic neuronal cells and fetal brain, and at low level in adult brain.

It localises to the nucleus. Functionally, transcriptional activator that binds to regulatory elements in promoter regions in a cell- and response element (target)-specific manner. Induces gene expression by binding as monomers to the NR4A1 response element (NBRE) 5'-AAAAGGTCA-3' site and as homodimers to the Nur response element (NurRE) site in the promoter of their regulated target genes. Plays a role in the regulation of proliferation, survival and differentiation of many different cell types and also in metabolism and inflammation. Mediates proliferation of vascular smooth muscle, myeloid progenitor cell and type B pancreatic cells; promotes mitogen-induced vascular smooth muscle cell proliferation through transactivation of SKP2 promoter by binding a NBRE site. Upon PDGF stimulation, stimulates vascular smooth muscle cell proliferation by regulating CCND1 and CCND2 expression. In islets, induces type B pancreatic cell proliferation through up-regulation of genes that activate cell cycle, as well as genes that cause degradation of the CDKN1A. Negatively regulates myeloid progenitor cell proliferation by repressing RUNX1 in a NBRE site-independent manner. During inner ear, plays a role as a key mediator of the proliferative growth phase of semicircular canal development. Also mediates survival of neuron and smooth muscle cells; mediates CREB-induced neuronal survival, and during hippocampus development, plays a critical role in pyramidal cell survival and axonal guidance. Is required for S phase entry of the cell cycle and survival of smooth muscle cells by inducing CCND1, resulting in RB1 phosphorylation. Binds to NBRE motif in CCND1 promoter, resulting in the activation of the promoter and CCND1 transcription. Also plays a role in inflammation; Upon TNF stimulation, mediates monocyte adhesion by inducing the expression of VCAM1 and ICAM1 by binding to the NBRE consensus site. In mast cells activated by Fc-epsilon receptor cross-linking, promotes the synthesis and release of cytokines but impairs events leading to degranulation. Also plays a role in metabolism; by modulating feeding behavior; and by playing a role in energy balance by inhibiting the glucocorticoid-induced orexigenic neuropeptides AGRP expression, at least in part by forming a complex with activated NR3C1 on the AGRP-glucocorticoid response element (GRE), and thus weakening the DNA binding activity of NR3C1. Upon catecholamines stimulation, regulates gene expression that controls oxidative metabolism in skeletal muscle. Plays a role in glucose transport by regulating translocation of the SLC2A4 glucose transporter to the cell surface. Finally, during gastrulation plays a crucial role in the formation of anterior mesoderm by controlling cell migration. Also participates in cardiac hypertrophy by activating PARP1. In Rattus norvegicus (Rat), this protein is Nuclear receptor subfamily 4 group A member 3 (Nr4a3).